Here is a 515-residue protein sequence, read N- to C-terminus: ATP synthase subunit alpha (515 aa).

Residue 169–176 (GDRQTGKT) participates in ATP binding.

The protein belongs to the ATPase alpha/beta chains family. In terms of assembly, F-type ATPases have 2 components, CF(1) - the catalytic core - and CF(0) - the membrane proton channel. CF(1) has five subunits: alpha(3), beta(3), gamma(1), delta(1), epsilon(1). CF(0) has three main subunits: a(1), b(2) and c(9-12). The alpha and beta chains form an alternating ring which encloses part of the gamma chain. CF(1) is attached to CF(0) by a central stalk formed by the gamma and epsilon chains, while a peripheral stalk is formed by the delta and b chains.

It localises to the cell inner membrane. The catalysed reaction is ATP + H2O + 4 H(+)(in) = ADP + phosphate + 5 H(+)(out). Produces ATP from ADP in the presence of a proton gradient across the membrane. The alpha chain is a regulatory subunit. The chain is ATP synthase subunit alpha from Myxococcus xanthus.